A 467-amino-acid polypeptide reads, in one-letter code: Chromosomal replication initiator protein DnaA (467 aa).

The tract at residues methionine 1–lysine 74 is domain I, interacts with DnaA modulators. Residues lysine 74–histidine 130 are domain II. Positions arginine 85–threonine 127 are disordered. A compositionally biased stretch (polar residues) spans proline 112–threonine 127. The interval arginine 131 to alanine 347 is domain III, AAA+ region. Positions 175, 177, 178, and 179 each coordinate ATP. The domain IV, binds dsDNA stretch occupies residues arginine 348 to glycine 467.

The protein belongs to the DnaA family. As to quaternary structure, oligomerizes as a right-handed, spiral filament on DNA at oriC.

The protein localises to the cytoplasm. In terms of biological role, plays an essential role in the initiation and regulation of chromosomal replication. ATP-DnaA binds to the origin of replication (oriC) to initiate formation of the DNA replication initiation complex once per cell cycle. Binds the DnaA box (a 9 base pair repeat at the origin) and separates the double-stranded (ds)DNA. Forms a right-handed helical filament on oriC DNA; dsDNA binds to the exterior of the filament while single-stranded (ss)DNA is stabiized in the filament's interior. The ATP-DnaA-oriC complex binds and stabilizes one strand of the AT-rich DNA unwinding element (DUE), permitting loading of DNA polymerase. After initiation quickly degrades to an ADP-DnaA complex that is not apt for DNA replication. Binds acidic phospholipids. This is Chromosomal replication initiator protein DnaA from Methylibium petroleiphilum (strain ATCC BAA-1232 / LMG 22953 / PM1).